Here is a 457-residue protein sequence, read N- to C-terminus: Nucleoprotein (457 aa).

The tract at residues 1–62 (MSFVPGQENA…ATTQPNSGSV (62 aa)) is disordered. A compositionally biased stretch (low complexity) spans 9-23 (NAGSRSSSGNRAGNG). Residues 49-61 (PKQTATTQPNSGS) show a composition bias toward polar residues. An RNA-binding region spans residues 56 to 197 (QPNSGSVVPH…GYYVEGSGRS (142 aa)). A CoV N NTD domain is found at 64–193 (PHYSWFSGIT…FLPQGYYVEG (130 aa)). Positions 109, 125, and 167 each coordinate RNA. Disordered stretches follow at residues 158–178 (TRTSADIAERDPSSHEAIPTR), 190–228 (YVEGSGRSAPASRSGSRSQSRGPNNRARSSSNQRQPASI), 249–290 (AGQP…FGKR), and 382–429 (QDGG…VNRE). Position 170 is a phosphoserine; by host (Ser170). Position 177 is a phosphothreonine; by host (Thr177). Low complexity predominate over residues 193–212 (GSGRSAPASRSGSRSQSRGP). Position 194 is a phosphoserine; by host (Ser194). The segment covering 215–225 (RARSSSNQRQP) has biased composition (polar residues). Residues 260-383 (AKEVRQKILN…ENLNAYQNQD (124 aa)) enclose the CoV N CTD domain. Residues 267-277 (ILNKPRQKRTP) are compositionally biased toward basic residues. The interval 267–384 (ILNKPRQKRT…NLNAYQNQDG (118 aa)) is dimerization. Phosphoserine; by host is present on Ser390. At Thr431 the chain carries Phosphothreonine; by host.

This sequence belongs to the betacoronavirus nucleocapsid protein family. Homooligomer. Both monomeric and oligomeric forms interact with RNA. Interacts with protein M. Interacts with NSP3; this interaction serves to tether the genome to the newly translated replicase-transcriptase complex at a very early stage of infection. In terms of processing, ADP-ribosylated. The ADP-ribosylation is retained in the virion during infection. Phosphorylated on serine and threonine residues.

The protein localises to the virion. Its subcellular location is the host endoplasmic reticulum-Golgi intermediate compartment. The protein resides in the host Golgi apparatus. Functionally, packages the positive strand viral genome RNA into a helical ribonucleocapsid (RNP) and plays a fundamental role during virion assembly through its interactions with the viral genome and membrane protein M. Plays an important role in enhancing the efficiency of subgenomic viral RNA transcription as well as viral replication. The protein is Nucleoprotein of Puffinus puffinus (Manx shearwater).